The chain runs to 194 residues: Fatty acid metabolism regulator protein (194 aa).

One can recognise an HTH tetR-type domain in the interval 5–65 (RPKYMQIIDA…SLFKEKMGQF (61 aa)). The segment at residues 28–47 (QVSKIAKQAGVADGTIYLYF) is a DNA-binding region (H-T-H motif).

Homodimer. Binds to DNA.

It localises to the cytoplasm. In terms of biological role, transcriptional regulator in fatty acid degradation. Represses transcription of genes required for fatty acid transport and beta-oxidation, including acdA, fadA, fadB, fadE, fadF, fadG, fadH, fadM, fadN, lcfA and lcfB. Binding of FadR to DNA is specifically inhibited by long chain fatty acyl-CoA compounds of 14-20 carbon atoms in length. The chain is Fatty acid metabolism regulator protein (fadR) from Bacillus subtilis (strain 168).